Reading from the N-terminus, the 647-residue chain is Protein cueball (647 aa).

The signal sequence occupies residues 1-22; sequence MLWCPSVLVPLIAVAACLPVLA. The Extracellular portion of the chain corresponds to 23-534; that stretch reads IGTPLEWEFA…CMTPSPWTSN (512 aa). Asparagine 80 and asparagine 106 each carry an N-linked (GlcNAc...) asparagine glycan. LDL-receptor class B repeat units follow at residues 119 to 166, 167 to 211, and 212 to 257; these read RNLF…DVCR, RKLY…DQLS, and DRIF…TNDA. N-linked (GlcNAc...) asparagine glycosylation is present at asparagine 175. N-linked (GlcNAc...) asparagine glycosylation is present at asparagine 316. 2 EGF-like domains span residues 365 to 401 and 436 to 473; these read DEKT…SRCE and EISK…ERCE. 5 disulfides stabilise this stretch: cysteine 376–cysteine 389, cysteine 391–cysteine 400, cysteine 440–cysteine 450, cysteine 444–cysteine 461, and cysteine 463–cysteine 472. Asparagine 475 carries N-linked (GlcNAc...) asparagine glycosylation. The helical transmembrane segment at 535 to 555 threads the bilayer; the sequence is VIIVLVLGIVSCFFLVAVIVH. The Cytoplasmic segment spans residues 556–647; it reads GFRRLYKPKR…LIHNMDDDLY (92 aa).

The protein belongs to the cueball family.

The protein localises to the cell membrane. Its function is as follows. Has a role in spermatogenesis and oogenesis. This Drosophila persimilis (Fruit fly) protein is Protein cueball.